A 192-amino-acid chain; its full sequence is MSKEEFPHEKDLKDEVTPDKAPKKDPKAASKEEVKEDPAKDYEKEIAELSAKNKDLEDKYLRSEAEIQNMQARYAKERAQLIKYESQSLAKEVLPAMDNLERALAVKADDEAAKQLQKGVQMTLDSLVKSMKDQGITEIKAEGETFDPALHQAVQTVAAENDDQKDHVVKVLQKGYQYKDRTLRPAMVVVAQ.

The segment at 1-43 (MSKEEFPHEKDLKDEVTPDKAPKKDPKAASKEEVKEDPAKDYE) is disordered.

The protein belongs to the GrpE family. Homodimer.

It is found in the cytoplasm. In terms of biological role, participates actively in the response to hyperosmotic and heat shock by preventing the aggregation of stress-denatured proteins, in association with DnaK and GrpE. It is the nucleotide exchange factor for DnaK and may function as a thermosensor. Unfolded proteins bind initially to DnaJ; upon interaction with the DnaJ-bound protein, DnaK hydrolyzes its bound ATP, resulting in the formation of a stable complex. GrpE releases ADP from DnaK; ATP binding to DnaK triggers the release of the substrate protein, thus completing the reaction cycle. Several rounds of ATP-dependent interactions between DnaJ, DnaK and GrpE are required for fully efficient folding. This chain is Protein GrpE, found in Lactobacillus gasseri (strain ATCC 33323 / DSM 20243 / BCRC 14619 / CIP 102991 / JCM 1131 / KCTC 3163 / NCIMB 11718 / NCTC 13722 / AM63).